Consider the following 616-residue polypeptide: Vitamin B12 transporter BtuB (616 aa).

Positions Met1–Ala20 are cleaved as a signal peptide. The TonB box motif lies at Asp26 to Asn33. Positions Pro38–Thr152 constitute a TBDR plug domain. Cyanocob(III)alamin contacts are provided by residues Leu83, Ser85, Asn92, and Val110 to Thr111. Residues Lys155–Phe616 form the TBDR beta-barrel domain. Beta stranded transmembrane passes span Thr158–Gly165, Tyr169–Gln178, and Thr184–Thr195. Positions 199, 211, 213, and 215 each coordinate Ca(2+). 2 beta stranded membrane passes run Phe217–Glu227 and Asp232–Ala248. Positions 249, 250, and 263 each coordinate Ca(2+). Transmembrane regions (beta stranded) follow at residues Arg265–Asn279, Asp281–Asn298, Thr311–Asp327, His330–Trp339, Tyr355–Gly371, Val373–Asp383, Phe387–Ile402, Tyr405–Asn419, Glu436–Glu445, Val451–Asn460, Tyr475–Phe492, Pro496–Ala511, Arg519–Thr531, Asp537–Asp552, Asn560–Ser574, Ile587–Ala598, and Ala604–Phe616. Thr311 serves as a coordination point for cyanocob(III)alamin. Arg519 is a cyanocob(III)alamin binding site. Positions Tyr599–Phe616 match the TonB C-terminal box motif.

This sequence belongs to the TonB-dependent receptor family. BtuB (TC 1.B.14.3.1) subfamily.

It is found in the cell outer membrane. Involved in the active translocation of vitamin B12 (cyanocobalamin) across the outer membrane to the periplasmic space. It derives its energy for transport by interacting with the trans-periplasmic membrane protein TonB. The chain is Vitamin B12 transporter BtuB from Cronobacter sakazakii (strain ATCC BAA-894) (Enterobacter sakazakii).